The following is a 314-amino-acid chain: MTLGSLGNSSSSVSATFLLSGIPGLERMHIWISIPLCFMYLVSIPGNCTILFIIKTERSLHEPMYLFLSMLALIDLGLSLCTLPTVLGIFWVGAREISHDACFAQLFFIHCFSFLESSVLLSMAFDRFVAICHPLHYVSILTNTVIGRIGLVSLGRSVALIFPLPFMLKRFPYCGSPVLSHSYCLHQEVMKLACADMKANSIYGMFVIVSTVGIDSLLILFSYALILRTVLSIASRAERFKALNTCVSHICAVLLFYTPMIGLSVIHRFGKQAPHLVQVVMGFMYLLFPPVMNPIVYSVKTKQIRDRVTHAFCY.

The Extracellular segment spans residues Met-1–Ile-30. A glycan (N-linked (GlcNAc...) asparagine) is linked at Asn-8. The helical transmembrane segment at Trp-31–Leu-51 threads the bilayer. Residues Phe-52–Ser-59 lie on the Cytoplasmic side of the membrane. Residues Leu-60–Leu-80 traverse the membrane as a helical segment. Residues Cys-81–Ala-104 are Extracellular-facing. Cys-102 and Cys-194 form a disulfide bridge. Residues Gln-105–Phe-125 form a helical membrane-spanning segment. The Cytoplasmic portion of the chain corresponds to Asp-126–Thr-144. The chain crosses the membrane as a helical span at residues Val-145–Pro-165. The Extracellular segment spans residues Phe-166–Ser-201. The helical transmembrane segment at Ile-202–Ser-222 threads the bilayer. Residues Tyr-223–Ala-242 are Cytoplasmic-facing. The helical transmembrane segment at Leu-243–Leu-263 threads the bilayer. Topologically, residues Ser-264–Gln-278 are extracellular. Residues Val-279–Val-299 traverse the membrane as a helical segment. Residues Lys-300–Tyr-314 are Cytoplasmic-facing.

Belongs to the G-protein coupled receptor 1 family.

Its subcellular location is the cell membrane. Functionally, odorant receptor. The protein is Olfactory receptor 51G2 (OR51G2) of Homo sapiens (Human).